The primary structure comprises 95 residues: Aspartyl/glutamyl-tRNA(Asn/Gln) amidotransferase subunit C (95 aa).

Belongs to the GatC family. As to quaternary structure, heterotrimer of A, B and C subunits.

The catalysed reaction is L-glutamyl-tRNA(Gln) + L-glutamine + ATP + H2O = L-glutaminyl-tRNA(Gln) + L-glutamate + ADP + phosphate + H(+). The enzyme catalyses L-aspartyl-tRNA(Asn) + L-glutamine + ATP + H2O = L-asparaginyl-tRNA(Asn) + L-glutamate + ADP + phosphate + 2 H(+). Functionally, allows the formation of correctly charged Asn-tRNA(Asn) or Gln-tRNA(Gln) through the transamidation of misacylated Asp-tRNA(Asn) or Glu-tRNA(Gln) in organisms which lack either or both of asparaginyl-tRNA or glutaminyl-tRNA synthetases. The reaction takes place in the presence of glutamine and ATP through an activated phospho-Asp-tRNA(Asn) or phospho-Glu-tRNA(Gln). This chain is Aspartyl/glutamyl-tRNA(Asn/Gln) amidotransferase subunit C, found in Chlorobaculum parvum (strain DSM 263 / NCIMB 8327) (Chlorobium vibrioforme subsp. thiosulfatophilum).